Consider the following 694-residue polypeptide: Elongation factor G (694 aa).

Residues 8–287 (EDYRNFGIMA…AVVEFLPAPT (280 aa)) form the tr-type G domain. Residues 17–24 (AHIDAGKT), 86–90 (DTPGH), and 140–143 (NKMD) contribute to the GTP site.

Belongs to the TRAFAC class translation factor GTPase superfamily. Classic translation factor GTPase family. EF-G/EF-2 subfamily.

Its subcellular location is the cytoplasm. In terms of biological role, catalyzes the GTP-dependent ribosomal translocation step during translation elongation. During this step, the ribosome changes from the pre-translocational (PRE) to the post-translocational (POST) state as the newly formed A-site-bound peptidyl-tRNA and P-site-bound deacylated tRNA move to the P and E sites, respectively. Catalyzes the coordinated movement of the two tRNA molecules, the mRNA and conformational changes in the ribosome. This chain is Elongation factor G, found in Brucella anthropi (strain ATCC 49188 / DSM 6882 / CCUG 24695 / JCM 21032 / LMG 3331 / NBRC 15819 / NCTC 12168 / Alc 37) (Ochrobactrum anthropi).